The sequence spans 75 residues: RNA-binding protein KhpA (75 aa).

The region spanning 29–75 (KVVYHLTVHPDDVGKVIGKNGRIAKAIRTVVYASKTDGNKRIYLDIM) is the KH domain.

The protein belongs to the KhpA RNA-binding protein family. In terms of assembly, forms a complex with KhpB.

It localises to the cytoplasm. Its function is as follows. A probable RNA chaperone. Forms a complex with KhpB which binds to cellular RNA and controls its expression. Plays a role in peptidoglycan (PG) homeostasis and cell length regulation. The polypeptide is RNA-binding protein KhpA (Oceanobacillus iheyensis (strain DSM 14371 / CIP 107618 / JCM 11309 / KCTC 3954 / HTE831)).